A 367-amino-acid polypeptide reads, in one-letter code: Developmentally-regulated GTP-binding protein 1 (367 aa).

Residues 2–16 (SGTLARIAEIEAEMA) form a required for interaction with STK16 region. Residues 65 to 290 (ARIGFVGFPS…LLEKIWDYLQ (226 aa)) enclose the OBG-type G domain. GTP is bound by residues 71-78 (GFPSVGKS), 96-100 (FTTLT), 117-120 (DLPG), 248-251 (NKID), and 271-273 (SAH). Ser78 and Thr98 together coordinate Mg(2+). The TGS domain occupies 290-366 (QLVRIYTKPK…EDEDVIQIVK (77 aa)).

This sequence belongs to the TRAFAC class OBG-HflX-like GTPase superfamily. OBG GTPase family. It depends on Mg(2+) as a cofactor. K(+) serves as cofactor. As to expression, expressed in many adult amd embryonic tissues. In adults, highest levels in ovaries and testes, followed by skeletal muscle, stomach, brain, kidney and liver. Weak expression in heart and brain.

The protein localises to the nucleus. Its subcellular location is the cytoplasm. It carries out the reaction GTP + H2O = GDP + phosphate + H(+). In terms of biological role, catalyzes the conversion of GTP to GDP through hydrolysis of the gamma-phosphate bond in GTP. Binds to microtubules and promotes microtubule polymerization and bundling. GTPase activity is not necessary for these microtubule-related functions. In Xenopus laevis (African clawed frog), this protein is Developmentally-regulated GTP-binding protein 1 (drg1).